A 114-amino-acid polypeptide reads, in one-letter code: DNA-binding protein Mbur_0117 (114 aa).

Residues 14-37 (ELQQQQSSPQNDAQAAYQQEQAQA) are disordered. Positions 16 to 35 (QQQQSSPQNDAQAAYQQEQA) are enriched in low complexity.

Belongs to the PDCD5 family.

This chain is DNA-binding protein Mbur_0117, found in Methanococcoides burtonii (strain DSM 6242 / NBRC 107633 / OCM 468 / ACE-M).